The following is a 590-amino-acid chain: Acyl-CoA ligase sidI (590 aa).

Residues 6–14 carry the PTS2-type peroxisomal targeting signal motif; sequence RLQQTLSHL. Residues 220-228, 359-364, aspartate 449, and arginine 464 contribute to the ATP site; these read TSGSTGNPK and SSYGLT. Substrate is bound at residue threonine 364. CoA is bound by residues 472 to 474 and 543 to 545; these read GGE and YFF. Position 563 (lysine 563) interacts with ATP.

Belongs to the ATP-dependent AMP-binding enzyme family.

It is found in the peroxisome. The protein operates within siderophore biosynthesis. In terms of biological role, acyl-CoA ligase; part of the siderophore biosynthetic pathway. Aspergillus fumigatus produces 4 types of siderophores, low-molecular-mass iron chelators, including excreted fusarinine C (FsC) and triacetylfusarinine C (TAFC) for iron uptake and intacellular ferricrocin (FC) for hyphal and hydroxyferricrocin (HFC) for conidial iron distribution and storage. TAFC consists of 3 N(2)-acetyl-N(5)-anhydromevalonyl-N(5)-hydroxyornithine residues cyclically linked by ester bonds; FC is a cyclic hexapeptide with the structure Gly-Ser-Gly-(N(5)-acetyl-N(5)-hydroxyornithine)x3. The biosynthesis of all four siderophores depends on the hydroxylation of ornithine, catalyzed by the monooxygenase sidA. Subsequently, the pathways for biosynthesis of extra- and intracellular siderophores split. For biosynthesis of extracellular siderophores, the transacylase sidF transfers anhydromevalonyl to N(5)-hydroxyornithine. The required anhydromevalonyl-CoA moiety is derived from mevalonate by CoA ligation and dehydration catalyzed by sidI and sidH respectively. The acetylation of N(5)-hydroxyornithine for FC biosynthesis involves the constitutively expressed sidL. FC is hydroxylated to HFC by an as yet uncharacterized enzyme during conidiation. Assembly of fusarinine C (FsC) and FC is catalyzed by two different nonribosomal peptide synthetases (NRPS), sidD and sidC respectively. Subsequently, sidG catalyzes N2-acetylation of FsC for forming TAFC. Both extra- and intracellular siderophores are crucial for growth during iron limitation and virulence. This chain is Acyl-CoA ligase sidI, found in Aspergillus fumigatus (strain ATCC MYA-4609 / CBS 101355 / FGSC A1100 / Af293) (Neosartorya fumigata).